The primary structure comprises 122 residues: Large ribosomal subunit protein uL14 (122 aa).

Belongs to the universal ribosomal protein uL14 family. Part of the 50S ribosomal subunit. Forms a cluster with proteins L3 and L19. In the 70S ribosome, L14 and L19 interact and together make contacts with the 16S rRNA in bridges B5 and B8.

Its function is as follows. Binds to 23S rRNA. Forms part of two intersubunit bridges in the 70S ribosome. The chain is Large ribosomal subunit protein uL14 from Syntrophotalea carbinolica (strain DSM 2380 / NBRC 103641 / GraBd1) (Pelobacter carbinolicus).